Reading from the N-terminus, the 287-residue chain is Anthocyanidin 3-O-glucosyltransferase 7 (287 aa).

The UDP-alpha-D-glucose site is built by A162, Q164, H179, W182, N183, S184, and E187. G202 contributes to the an anthocyanidin binding site. D203 and Q204 together coordinate UDP-alpha-D-glucose.

This sequence belongs to the UDP-glycosyltransferase family. Expressed in cotyledons, hypocotyls, roots and leaves.

The catalysed reaction is an anthocyanidin + UDP-alpha-D-glucose + H(+) = an anthocyanidin 3-O-beta-D-glucoside + UDP. It participates in pigment biosynthesis; anthocyanin biosynthesis. In the presence of other necessary color factors, this glycosylation reaction allows the accumulation of anthocyanin pigments. The polypeptide is Anthocyanidin 3-O-glucosyltransferase 7 (GT7) (Manihot esculenta (Cassava)).